The sequence spans 534 residues: 5,6-dihydroxyindole-2-carboxylic acid oxidase (534 aa).

Positions 1–23 (MLGPATFLPLTAALLLLIPGGRA) are cleaved as a signal peptide. The Lumenal, melanosome segment spans residues 24 to 477 (QFPRQCVTPE…WPSRALNFTE (454 aa)). Intrachain disulfides connect Cys29/Cys40, Cys41/Cys65, Cys56/Cys99, Cys101/Cys110, and Cys113/Cys122. Residues Asn96 and Asn104 are each glycosylated (N-linked (GlcNAc...) asparagine). Asn175 and Asn181 each carry an N-linked (GlcNAc...) asparagine glycan. Zn(2+) is bound by residues His192, His215, and His224. Cystine bridges form between Cys258/Cys261 and Cys290/Cys303. 2 N-linked (GlcNAc...) asparagine glycosylation sites follow: Asn304 and Asn350. Positions 377 and 381 each coordinate Zn(2+). The N-linked (GlcNAc...) asparagine glycan is linked to Asn385. Zn(2+) is bound at residue His404. A helical membrane pass occupies residues 478-501 (IITIAVVAALVLVAVIFAAASCAV). The Cytoplasmic portion of the chain corresponds to 502 to 534 (HRSRKDDVHQPLLGEQYPRYSEEYERDASQSAV).

This sequence belongs to the tyrosinase family. Cu(2+) is required as a cofactor. Zn(2+) serves as cofactor.

It is found in the melanosome membrane. It catalyses the reaction 2 5,6-dihydroxyindole-2-carboxylate + O2 = 2 indole-5,6-quinone-2-carboxylate + 2 H2O. Its pathway is pigment biosynthesis; melanin biosynthesis. Its function is as follows. Plays a role in melanin biosynthesis. Catalyzes the oxidation of 5,6-dihydroxyindole-2-carboxylic acid (DHICA) into indole-5,6-quinone-2-carboxylic acid. May regulate or influence the type of melanin synthesized. Also to a lower extent, capable of hydroxylating tyrosine and producing melanin. The protein is 5,6-dihydroxyindole-2-carboxylic acid oxidase (TYRP1) of Ambystoma mexicanum (Axolotl).